A 226-amino-acid chain; its full sequence is 3-dehydroquinate dehydratase (226 aa).

3-dehydroquinate contacts are provided by residues 33 to 35 (ELR) and Arg-65. His-120 (proton donor/acceptor) is an active-site residue. The active-site Schiff-base intermediate with substrate is the Lys-147. 3-dehydroquinate contacts are provided by Arg-186, Ser-205, and Gln-209.

It belongs to the type-I 3-dehydroquinase family. In terms of assembly, homodimer.

The enzyme catalyses 3-dehydroquinate = 3-dehydroshikimate + H2O. The protein operates within metabolic intermediate biosynthesis; chorismate biosynthesis; chorismate from D-erythrose 4-phosphate and phosphoenolpyruvate: step 3/7. In terms of biological role, involved in the third step of the chorismate pathway, which leads to the biosynthesis of aromatic amino acids. Catalyzes the cis-dehydration of 3-dehydroquinate (DHQ) and introduces the first double bond of the aromatic ring to yield 3-dehydroshikimate. The sequence is that of 3-dehydroquinate dehydratase from Thermodesulfovibrio yellowstonii (strain ATCC 51303 / DSM 11347 / YP87).